A 366-amino-acid chain; its full sequence is Sigma54-dependent transcriptional activator SfnR (366 aa).

One can recognise a Sigma-54 factor interaction domain in the interval 21 to 250 (QVFEDPRSQA…LENVIHHSLL (230 aa)). Residues 49–56 (GETGTGKE) and 112–121 (ANGGTLFLDE) contribute to the ATP site.

In terms of biological role, involved in the dimethyl sulfide degradation pathway. Activates the expression of sfnG and sfnF. This Pseudomonas putida (Arthrobacter siderocapsulatus) protein is Sigma54-dependent transcriptional activator SfnR.